The following is a 405-amino-acid chain: Formate-dependent phosphoribosylglycinamide formyltransferase (405 aa).

N(1)-(5-phospho-beta-D-ribosyl)glycinamide contacts are provided by residues 22 to 23 (EL) and E82. ATP-binding positions include R115, K162, 167-172 (SSGKGQ), 202-205 (EGFI), and E210. Residues 120-320 (RLAAETLGLA…EFELHARAIL (201 aa)) enclose the ATP-grasp domain. 2 residues coordinate Mg(2+): E279 and E291. N(1)-(5-phospho-beta-D-ribosyl)glycinamide-binding positions include D298, K367, and 374–375 (RR).

The protein belongs to the PurK/PurT family. Homodimer.

It carries out the reaction N(1)-(5-phospho-beta-D-ribosyl)glycinamide + formate + ATP = N(2)-formyl-N(1)-(5-phospho-beta-D-ribosyl)glycinamide + ADP + phosphate + H(+). Its pathway is purine metabolism; IMP biosynthesis via de novo pathway; N(2)-formyl-N(1)-(5-phospho-D-ribosyl)glycinamide from N(1)-(5-phospho-D-ribosyl)glycinamide (formate route): step 1/1. Functionally, involved in the de novo purine biosynthesis. Catalyzes the transfer of formate to 5-phospho-ribosyl-glycinamide (GAR), producing 5-phospho-ribosyl-N-formylglycinamide (FGAR). Formate is provided by PurU via hydrolysis of 10-formyl-tetrahydrofolate. The protein is Formate-dependent phosphoribosylglycinamide formyltransferase of Delftia acidovorans (strain DSM 14801 / SPH-1).